Reading from the N-terminus, the 1347-residue chain is Spermatogenesis-associated protein 31A5 (1347 aa).

The chain crosses the membrane as a helical span at residues 23–43 (PWVLDIFLTLVFALGFFFLLL). Disordered stretches follow at residues 55–87 (PSPS…GREC), 106–233 (GPHL…RDST), 373–397 (EQDT…GPQK), 628–657 (DESP…KEAQ), 900–955 (RGIP…REAV), 1084–1161 (VHEE…PSVS), and 1313–1335 (KAVS…SHHH). Over residues 60 to 82 (GKRKCPVGRRRRPRGRMKNHSLR) the composition is skewed to basic residues. Polar residues predominate over residues 165 to 178 (LASTPSPGPMTTSV). Residues 198–211 (PEPPALFPHPPHTP) show a composition bias toward pro residues. Composition is skewed to polar residues over residues 631-651 (PGTS…STGE) and 927-948 (LTYS…SSKA). Composition is skewed to basic and acidic residues over residues 1108–1127 (HKSE…RLEG) and 1137–1146 (RKTEDTHQDE).

It belongs to the SPATA31 family.

The protein resides in the membrane. In terms of biological role, may play a role in spermatogenesis. The chain is Spermatogenesis-associated protein 31A5 (SPATA31A5) from Homo sapiens (Human).